A 254-amino-acid chain; its full sequence is 4-hydroxy-tetrahydrodipicolinate reductase (254 aa).

NAD(+)-binding positions include 8-13 (GASGKM), 87-89 (GTT), and 111-114 (ATNM). H143 acts as the Proton donor/acceptor in catalysis. H144 contacts (S)-2,3,4,5-tetrahydrodipicolinate. K147 serves as the catalytic Proton donor. (S)-2,3,4,5-tetrahydrodipicolinate is bound at residue 153–154 (GT).

Belongs to the DapB family.

It localises to the cytoplasm. It carries out the reaction (S)-2,3,4,5-tetrahydrodipicolinate + NAD(+) + H2O = (2S,4S)-4-hydroxy-2,3,4,5-tetrahydrodipicolinate + NADH + H(+). It catalyses the reaction (S)-2,3,4,5-tetrahydrodipicolinate + NADP(+) + H2O = (2S,4S)-4-hydroxy-2,3,4,5-tetrahydrodipicolinate + NADPH + H(+). The protein operates within amino-acid biosynthesis; L-lysine biosynthesis via DAP pathway; (S)-tetrahydrodipicolinate from L-aspartate: step 4/4. Catalyzes the conversion of 4-hydroxy-tetrahydrodipicolinate (HTPA) to tetrahydrodipicolinate. The chain is 4-hydroxy-tetrahydrodipicolinate reductase from Campylobacter curvus (strain 525.92).